The primary structure comprises 160 residues: D-aminoacyl-tRNA deacylase (160 aa).

Positions 137–138 match the Gly-cisPro motif, important for rejection of L-amino acids motif; sequence GP.

Belongs to the DTD family. Homodimer.

Its subcellular location is the cytoplasm. It carries out the reaction glycyl-tRNA(Ala) + H2O = tRNA(Ala) + glycine + H(+). It catalyses the reaction a D-aminoacyl-tRNA + H2O = a tRNA + a D-alpha-amino acid + H(+). Functionally, an aminoacyl-tRNA editing enzyme that deacylates mischarged D-aminoacyl-tRNAs. Also deacylates mischarged glycyl-tRNA(Ala), protecting cells against glycine mischarging by AlaRS. Acts via tRNA-based rather than protein-based catalysis; rejects L-amino acids rather than detecting D-amino acids in the active site. By recycling D-aminoacyl-tRNA to D-amino acids and free tRNA molecules, this enzyme counteracts the toxicity associated with the formation of D-aminoacyl-tRNA entities in vivo and helps enforce protein L-homochirality. The protein is D-aminoacyl-tRNA deacylase of Chloroflexus aurantiacus (strain ATCC 29364 / DSM 637 / Y-400-fl).